The chain runs to 42 residues: uncharacterized protein (42 aa).

Positions Arg-20–Asn-42 are disordered.

This is an uncharacterized protein from Escherichia coli.